A 926-amino-acid polypeptide reads, in one-letter code: Armadillo repeat-containing protein 5 (926 aa).

Over residues 82–104 the composition is skewed to low complexity; sequence PAPSQAASGSAPSSVASAGSTPG. Residues 82 to 111 form a disordered region; it reads PAPSQAASGSAPSSVASAGSTPGHAPAAES. ARM repeat units lie at residues 139 to 179, 181 to 221, 223 to 263, 267 to 306, 307 to 354, 355 to 399, and 401 to 440; these read GACR…NLAM, PESC…NLAD, PQHR…ELSR, RACA…NLCA, QGLV…LCRE, AINR…DTGA, and GKLQ…EERT. The residue at position 337 (Ser337) is a Phosphoserine. Residues 472-516 form a disordered region; it reads WSPERCPMPEPSESVSPTPGQTSMSTPRTLRKPGRIPAATPEEPW. The span at 484-499 shows a compositional bias: polar residues; it reads ESVSPTPGQTSMSTPR. The BTB domain occupies 745 to 813; the sequence is PDLHFVLDSG…LHGCRGCGAA (69 aa).

Substrate-recognition component of the BCR(ARMC5) E3 ubiquitin ligase complex, at least composed of CUL3, ARMC5 and RBX1. Post-translationally, ubiquitinated by a BCR (BTB-CUL3-RBX1) E3 ubiquitin ligase complex, leading to its degradation. Deubiquitinated by USP7. Expression is high in the thymus, stomach, bone marrow and lymphatic tissues (including lymph nodes and intestinal wall). Also expressed in the adrenal gland, skin and in brain structures, with noticeable levels found in the cerebellum.

It is found in the nucleus. It localises to the chromosome. The protein localises to the cytoplasm. Its pathway is protein modification; protein ubiquitination. In terms of biological role, substrate-recognition component of a BCR (BTB-CUL3-RBX1) E3 ubiquitin ligase complex that terminates RNA polymerase II (Pol II) transcription in the promoter-proximal region of genes. The BCR(ARMC5) complex provides a quality checkpoint during transcription elongation by driving premature transcription termination of transcripts that are unfavorably configured for transcriptional elongation: the BCR(ARMC5) complex acts by mediating ubiquitination of Pol II subunit POLR2A phosphorylated at 'Ser-5' of the C-terminal domain (CTD), leading to POLR2A degradation. The BCR(ARMC5) complex acts in parallel of the integrator complex and is specific for RNA Pol II originating from the promoter-proximal zone: it does not ubiquitinate elongation-stalled RNA Pol II. The BCR(ARMC5) complex also acts as a regulator of fatty acid desaturation by mediating ubiquitination and degradation of SCAP-free SREBF1 and SREBF2. Involved in fetal development, T-cell function and adrenal gland growth homeostasis. Plays a role in steroidogenesis, modulates steroidogenic enzymes expression and cortisol production. This is Armadillo repeat-containing protein 5 from Mus musculus (Mouse).